The following is a 170-amino-acid chain: Zinc finger protein 576 (170 aa).

A disordered region spans residues 1–29 (MEDPNPEENMKQQDSPKERSPQSPGGNIC). Residues 8–20 (ENMKQQDSPKERS) show a composition bias toward basic and acidic residues. 4 consecutive C2H2-type zinc fingers follow at residues 34 to 57 (PKCTRCLITFADSKFQERHMKREH), 71 to 93 (FICFTCARSFPSSKALITHQRSH), 112 to 134 (FPCPDCGKTFGQAVSLRRHRQMH), and 143 to 165 (FACTECGQDFAQEAGLHQHYIRH).

This sequence belongs to the krueppel C2H2-type zinc-finger protein family.

It localises to the nucleus. May be involved in transcriptional regulation. The protein is Zinc finger protein 576 (ZNF576) of Homo sapiens (Human).